The following is a 204-amino-acid chain: ATP phosphoribosyltransferase (204 aa).

It belongs to the ATP phosphoribosyltransferase family. Short subfamily. Heteromultimer composed of HisG and HisZ subunits.

It is found in the cytoplasm. The catalysed reaction is 1-(5-phospho-beta-D-ribosyl)-ATP + diphosphate = 5-phospho-alpha-D-ribose 1-diphosphate + ATP. The protein operates within amino-acid biosynthesis; L-histidine biosynthesis; L-histidine from 5-phospho-alpha-D-ribose 1-diphosphate: step 1/9. Its function is as follows. Catalyzes the condensation of ATP and 5-phosphoribose 1-diphosphate to form N'-(5'-phosphoribosyl)-ATP (PR-ATP). Has a crucial role in the pathway because the rate of histidine biosynthesis seems to be controlled primarily by regulation of HisG enzymatic activity. The polypeptide is ATP phosphoribosyltransferase (Staphylococcus aureus (strain MRSA252)).